A 308-amino-acid polypeptide reads, in one-letter code: 11-beta-hydroxysteroid dehydrogenase-like 2 (308 aa).

A helical; Signal-anchor for type II membrane protein membrane pass occupies residues 10–30; it reads FLLPPLTISFLVLFYPFYLFT. Residues 53 to 79 and Asp-104 each bind NADP(+); that span reads GASS…VARR. Substrate is bound at residue Ser-183. The active-site Proton acceptor is the Tyr-196. Residues 196 to 200 and Lys-200 contribute to the NADP(+) site; that span reads YSASK.

Belongs to the short-chain dehydrogenases/reductases (SDR) family.

It localises to the membrane. The polypeptide is 11-beta-hydroxysteroid dehydrogenase-like 2 (HSD2) (Arabidopsis thaliana (Mouse-ear cress)).